Reading from the N-terminus, the 754-residue chain is Glutathione biosynthesis bifunctional protein GshAB (754 aa).

The tract at residues 1-332 (MTLNQLLQKL…QGHALNEKIA (332 aa)) is glutamate--cysteine ligase. Residues 488–746 (KKILADASFP…ITTKILDKLF (259 aa)) enclose the ATP-grasp domain. 515 to 573 (PLIKDKQIVVKPKSTNFGLGISIFQEPASLDNYQKALEIAFAEDTSVLVEEFIPGTEYR) lines the ATP pocket. Residues D695, E716, and N718 each contribute to the Mg(2+) site. Residues D695, E716, and N718 each coordinate Mn(2+).

This sequence in the N-terminal section; belongs to the glutamate--cysteine ligase type 1 family. Type 2 subfamily. Monomer. Mg(2+) is required as a cofactor. Requires Mn(2+) as cofactor.

It catalyses the reaction L-cysteine + L-glutamate + ATP = gamma-L-glutamyl-L-cysteine + ADP + phosphate + H(+). The enzyme catalyses gamma-L-glutamyl-L-cysteine + glycine + ATP = glutathione + ADP + phosphate + H(+). The protein operates within sulfur metabolism; glutathione biosynthesis; glutathione from L-cysteine and L-glutamate: step 1/2. It functions in the pathway sulfur metabolism; glutathione biosynthesis; glutathione from L-cysteine and L-glutamate: step 2/2. Functionally, synthesizes glutathione from L-glutamate and L-cysteine via gamma-L-glutamyl-L-cysteine. This chain is Glutathione biosynthesis bifunctional protein GshAB, found in Streptococcus thermophilus (strain ATCC BAA-250 / LMG 18311).